Here is a 153-residue protein sequence, read N- to C-terminus: ATP synthase subunit b' (153 aa).

A helical membrane pass occupies residues 23–40 (LMAIQVVALTYILNSLFF).

It belongs to the ATPase B chain family. As to quaternary structure, F-type ATPases have 2 components, F(1) - the catalytic core - and F(0) - the membrane proton channel. F(1) has five subunits: alpha(3), beta(3), gamma(1), delta(1), epsilon(1). F(0) has four main subunits: a(1), b(1), b'(1) and c(10-14). The alpha and beta chains form an alternating ring which encloses part of the gamma chain. F(1) is attached to F(0) by a central stalk formed by the gamma and epsilon chains, while a peripheral stalk is formed by the delta, b and b' chains.

It localises to the cellular thylakoid membrane. Functionally, f(1)F(0) ATP synthase produces ATP from ADP in the presence of a proton or sodium gradient. F-type ATPases consist of two structural domains, F(1) containing the extramembraneous catalytic core and F(0) containing the membrane proton channel, linked together by a central stalk and a peripheral stalk. During catalysis, ATP synthesis in the catalytic domain of F(1) is coupled via a rotary mechanism of the central stalk subunits to proton translocation. Component of the F(0) channel, it forms part of the peripheral stalk, linking F(1) to F(0). The b'-subunit is a diverged and duplicated form of b found in plants and photosynthetic bacteria. This chain is ATP synthase subunit b', found in Prochlorococcus marinus (strain MIT 9301).